A 464-amino-acid polypeptide reads, in one-letter code: MEERKVKRIIMFPLPFTGHFNPMIELAGIFHNRGFSVTILHTSFNFPDPSRHPQFTFRTITHKNEGEEDPLSQSETSSGKDLVVLISLLKQYYTEPSLAEEVGEGGTVCCLVSDALWGRNTEIVAKEIGVCTMVMRTSGAATFCAYTAFPLLIDKGYLPIQGSRLDELVTELPPLKVKDLPVIKTKEPEGLNRILNDMVEGAKLSSGVVWNTFEDLERHSLMDCRSKLQVPLFPIGPFHKHRTDLPPKPKNKDKDDDEILTDWLNKQAPQSVVYVSFGSLAAIEENEFFEIAWGLRNSELPFLWVVRPGMVRGTEWLESLPCGFLENIGHQGKIVKWVNQLETLAHPAVGAFWTHCGWNSTIESICEGVPMICTPCFSDQHVNARYIVDVWRVGMMLERCKMERTEIEKVVTSVMMENGAGLTEMCLELKEKANVCLSEDGSSSKYLDKLVSHVLSFDSSAFAS.

UDP-alpha-D-glucose contacts are provided by residues Ser-279, 338–340, 355–363, and 377–380; these read VNQ, HCGWNSTIE, and FSDQ.

It belongs to the UDP-glycosyltransferase family.

This is UDP-glycosyltransferase 76F2 (UGT76F2) from Arabidopsis thaliana (Mouse-ear cress).